A 78-amino-acid chain; its full sequence is Large ribosomal subunit protein bL28 (78 aa).

Residues 1–23 (MSRVCQVTGKRPMVGNNRSHAKN) form a disordered region.

This sequence belongs to the bacterial ribosomal protein bL28 family.

This Shewanella pealeana (strain ATCC 700345 / ANG-SQ1) protein is Large ribosomal subunit protein bL28.